The sequence spans 587 residues: Aspartate--tRNA(Asp/Asn) ligase (587 aa).

Residue Glu173 coordinates L-aspartate. Residues 197 to 200 (QLFK) form an aspartate region. L-aspartate is bound at residue Arg219. ATP is bound by residues 219-221 (RDE) and Gln228. His448 serves as a coordination point for L-aspartate. Glu481 lines the ATP pocket. Residue Arg488 coordinates L-aspartate. Residue 533 to 536 (GLDR) participates in ATP binding.

The protein belongs to the class-II aminoacyl-tRNA synthetase family. Type 1 subfamily. Homodimer.

Its subcellular location is the cytoplasm. It carries out the reaction tRNA(Asx) + L-aspartate + ATP = L-aspartyl-tRNA(Asx) + AMP + diphosphate. In terms of biological role, aspartyl-tRNA synthetase with relaxed tRNA specificity since it is able to aspartylate not only its cognate tRNA(Asp) but also tRNA(Asn). Reaction proceeds in two steps: L-aspartate is first activated by ATP to form Asp-AMP and then transferred to the acceptor end of tRNA(Asp/Asn). This is Aspartate--tRNA(Asp/Asn) ligase from Alcanivorax borkumensis (strain ATCC 700651 / DSM 11573 / NCIMB 13689 / SK2).